We begin with the raw amino-acid sequence, 291 residues long: 33 kDa chaperonin (291 aa).

2 disulfides stabilise this stretch: C229/C231 and C262/C265.

Belongs to the HSP33 family. Under oxidizing conditions two disulfide bonds are formed involving the reactive cysteines. Under reducing conditions zinc is bound to the reactive cysteines and the protein is inactive.

It localises to the cytoplasm. Its function is as follows. Redox regulated molecular chaperone. Protects both thermally unfolding and oxidatively damaged proteins from irreversible aggregation. Plays an important role in the bacterial defense system toward oxidative stress. The sequence is that of 33 kDa chaperonin from Aliivibrio fischeri (strain ATCC 700601 / ES114) (Vibrio fischeri).